A 145-amino-acid chain; its full sequence is Angiogenin-3 (145 aa).

The first 24 residues, 1–24, serve as a signal peptide directing secretion; sequence MVMSPGSLLLVFLLSLDVIPPTLA. Glutamine 25 carries the post-translational modification Pyrrolidone carboxylic acid. The Proton acceptor role is filled by histidine 37. 3 disulfides stabilise this stretch: cysteine 50/cysteine 104, cysteine 63/cysteine 115, and cysteine 81/cysteine 130. A Nucleolar localization signal motif is present at residues 55–59; sequence KKRKL. The Zn(2+) site is built by glutamate 65 and histidine 106. Histidine 137 (proton donor) is an active-site residue.

Belongs to the pancreatic ribonuclease family.

The protein resides in the cytoplasmic vesicle. It localises to the secretory vesicle lumen. The protein localises to the secreted. It is found in the nucleus. Its subcellular location is the nucleolus. With respect to regulation, divalent metal ions, such as Cu2+ and Zn2+, may inhibit the ribonucleolytic activity. Its function is as follows. Has low ribonuclease activity (in vitro). The chain is Angiogenin-3 (Ang3) from Mus musculus (Mouse).